A 256-amino-acid polypeptide reads, in one-letter code: Ribosomal RNA small subunit methyltransferase A (256 aa).

S-adenosyl-L-methionine-binding residues include Asn-12, Leu-14, Gly-39, Glu-60, Asp-85, and Asn-103.

This sequence belongs to the class I-like SAM-binding methyltransferase superfamily. rRNA adenine N(6)-methyltransferase family. RsmA subfamily.

It localises to the cytoplasm. The catalysed reaction is adenosine(1518)/adenosine(1519) in 16S rRNA + 4 S-adenosyl-L-methionine = N(6)-dimethyladenosine(1518)/N(6)-dimethyladenosine(1519) in 16S rRNA + 4 S-adenosyl-L-homocysteine + 4 H(+). Functionally, specifically dimethylates two adjacent adenosines (A1518 and A1519) in the loop of a conserved hairpin near the 3'-end of 16S rRNA in the 30S particle. May play a critical role in biogenesis of 30S subunits. In Legionella pneumophila subsp. pneumophila (strain Philadelphia 1 / ATCC 33152 / DSM 7513), this protein is Ribosomal RNA small subunit methyltransferase A.